Here is a 360-residue protein sequence, read N- to C-terminus: Histidinol-phosphate aminotransferase (360 aa).

Lysine 222 bears the N6-(pyridoxal phosphate)lysine mark.

It belongs to the class-II pyridoxal-phosphate-dependent aminotransferase family. Histidinol-phosphate aminotransferase subfamily. In terms of assembly, homodimer. The cofactor is pyridoxal 5'-phosphate.

It carries out the reaction L-histidinol phosphate + 2-oxoglutarate = 3-(imidazol-4-yl)-2-oxopropyl phosphate + L-glutamate. The protein operates within amino-acid biosynthesis; L-histidine biosynthesis; L-histidine from 5-phospho-alpha-D-ribose 1-diphosphate: step 7/9. This Listeria monocytogenes serotype 4b (strain F2365) protein is Histidinol-phosphate aminotransferase.